The chain runs to 168 residues: Ribosome-binding factor A (168 aa).

Residues 122–136 (VRRDARPAGDDDPYR) show a composition bias toward basic and acidic residues. The disordered stretch occupies residues 122 to 168 (VRRDARPAGDDDPYRRPRPAAGEVDELSEVDELSEVDEYGGTARQEG). The span at 144–159 (EVDELSEVDELSEVDE) shows a compositional bias: acidic residues.

It belongs to the RbfA family. As to quaternary structure, monomer. Binds 30S ribosomal subunits, but not 50S ribosomal subunits or 70S ribosomes.

It is found in the cytoplasm. Functionally, one of several proteins that assist in the late maturation steps of the functional core of the 30S ribosomal subunit. Associates with free 30S ribosomal subunits (but not with 30S subunits that are part of 70S ribosomes or polysomes). Required for efficient processing of 16S rRNA. May interact with the 5'-terminal helix region of 16S rRNA. The polypeptide is Ribosome-binding factor A (Frankia casuarinae (strain DSM 45818 / CECT 9043 / HFP020203 / CcI3)).